The following is a 620-amino-acid chain: uncharacterized protein (620 aa).

The 263-residue stretch at 324-586 (RRYVTIAIIK…HPWEKGIYPT (263 aa)) folds into the Radical SAM core domain. 3 residues coordinate [4Fe-4S] cluster: Cys338, Cys342, and Cys345. Lys552 is modified (N6-(pyridoxal phosphate)lysine).

This sequence belongs to the radical SAM superfamily. KamA family. [4Fe-4S] cluster serves as cofactor. The cofactor is pyridoxal 5'-phosphate.

This is an uncharacterized protein from Methanocaldococcus jannaschii (strain ATCC 43067 / DSM 2661 / JAL-1 / JCM 10045 / NBRC 100440) (Methanococcus jannaschii).